A 217-amino-acid chain; its full sequence is Imidazole glycerol phosphate synthase subunit HisH (217 aa).

Residues 3–217 form the Glutamine amidotransferase type-1 domain; it reads TIAIVDYGVG…LYRNFVHWNP (215 aa). Cys82 functions as the Nucleophile in the catalytic mechanism. Residues His197 and Glu199 contribute to the active site.

In terms of assembly, heterodimer of HisH and HisF.

The protein resides in the cytoplasm. The enzyme catalyses 5-[(5-phospho-1-deoxy-D-ribulos-1-ylimino)methylamino]-1-(5-phospho-beta-D-ribosyl)imidazole-4-carboxamide + L-glutamine = D-erythro-1-(imidazol-4-yl)glycerol 3-phosphate + 5-amino-1-(5-phospho-beta-D-ribosyl)imidazole-4-carboxamide + L-glutamate + H(+). It carries out the reaction L-glutamine + H2O = L-glutamate + NH4(+). The protein operates within amino-acid biosynthesis; L-histidine biosynthesis; L-histidine from 5-phospho-alpha-D-ribose 1-diphosphate: step 5/9. IGPS catalyzes the conversion of PRFAR and glutamine to IGP, AICAR and glutamate. The HisH subunit catalyzes the hydrolysis of glutamine to glutamate and ammonia as part of the synthesis of IGP and AICAR. The resulting ammonia molecule is channeled to the active site of HisF. The chain is Imidazole glycerol phosphate synthase subunit HisH from Cupriavidus pinatubonensis (strain JMP 134 / LMG 1197) (Cupriavidus necator (strain JMP 134)).